The sequence spans 562 residues: Solute carrier family 40 member 1 (562 aa).

At 1–20 (MDSPASKKPRCERFREFFKS) the chain is on the cytoplasmic side. Residues 21–50 (AKFLIYVGHALSTWGDRMWNFAVAVFLVEL) traverse the membrane as a helical segment. A Fe cation-binding site is contributed by Asp36. Topologically, residues 51–54 (YGNS) are extracellular. A helical transmembrane segment spans residues 55–81 (LLLTAVYGLVVAGSVLLLGAIIGDWVD). At 82-84 (KNP) the chain is on the cytoplasmic side. A helical membrane pass occupies residues 85-115 (RLKVAQTSLVVQNSAVILCGALLMAVFQFKQ). Topologically, residues 116–123 (QLSSMYDG) are extracellular. A helical membrane pass occupies residues 124–159 (WLLTTCYIMVISIANIANLASTAMSITIQRDWVVVV). The Cytoplasmic portion of the chain corresponds to 160 to 161 (AG). A helical membrane pass occupies residues 162-192 (DDRSKLADMNATVRIIDQLTNILAPMLVGQI). The Extracellular portion of the chain corresponds to 193-199 (MAFGSHF). A helical membrane pass occupies residues 200–226 (IGCGFISGWNLFSMCLEYFLLWKVYQK). Over 227–300 (TPALAFKAGQ…DGWVAYYNQS (74 aa)) the chain is Cytoplasmic. The helical transmembrane segment at 301–327 (IFFAGMSLAFLYMTVLGFDCITTGYAY) threads the bilayer. Cys320 serves as a coordination point for Fe cation. Residues 328 to 332 (TQGLN) are Extracellular-facing. A helical transmembrane segment spans residues 333-360 (GSVLSLLMGASAVSGICGTVAFTWIRKK). The Cytoplasmic segment spans residues 361–362 (CG). A helical membrane pass occupies residues 363–385 (LIRTGFIAGVTQLSCLTLCVASV). Topologically, residues 386–444 (FAPGSPFDLSVSPFEEVLRHLFGDSGSLRESPTFIPTTEPPIQANVTVFEEAPPVESYM) are extracellular. A helical membrane pass occupies residues 445-474 (SVGLLFAGVIAARVGLWSFDLTVTQLIQEN). The Cytoplasmic portion of the chain corresponds to 475–479 (VIESE). The chain crosses the membrane as a helical span at residues 480 to 504 (RGVINGVQNSMNYLLDLLHFIMVIL). A Fe cation-binding site is contributed by His498. The Extracellular portion of the chain corresponds to 505-507 (APN). A helical membrane pass occupies residues 508 to 533 (PEAFGLLVIISVSFVAMGHMMYFRFA). Residues 534-562 (YKSLGSRLFLFCSPEQKPDPNIPSLPNSV) lie on the Cytoplasmic side of the membrane.

This sequence belongs to the ferroportin (FP) (TC 2.A.100) family. SLC40A subfamily. As to expression, expressed in the yolk sac and placenta.

Its subcellular location is the cell membrane. It is found in the basolateral cell membrane. The catalysed reaction is Fe(2+)(in) = Fe(2+)(out). Transports Fe(2+) from the inside of a cell to the outside of the cell, playing a key role for maintaining systemic iron homeostasis. May be involved in transfer of Fe(2+) between maternal and fetal circulation. In Danio rerio (Zebrafish), this protein is Solute carrier family 40 member 1 (slc40a1).